The primary structure comprises 198 residues: Segregation and condensation protein B (198 aa).

Positions 169–198 (LADPAAEEPDQNEMDLFFDRFNQSKEQEEE) are disordered.

Belongs to the ScpB family. Homodimer. Homodimerization may be required to stabilize the binding of ScpA to the Smc head domains. Component of a cohesin-like complex composed of ScpA, ScpB and the Smc homodimer, in which ScpA and ScpB bind to the head domain of Smc. The presence of the three proteins is required for the association of the complex with DNA.

Its subcellular location is the cytoplasm. Functionally, participates in chromosomal partition during cell division. May act via the formation of a condensin-like complex containing Smc and ScpA that pull DNA away from mid-cell into both cell halves. This chain is Segregation and condensation protein B, found in Listeria monocytogenes serotype 4a (strain HCC23).